The primary structure comprises 108 residues: Large ribosomal subunit protein uL24 (108 aa).

The protein belongs to the universal ribosomal protein uL24 family. In terms of assembly, part of the 50S ribosomal subunit.

Its function is as follows. One of two assembly initiator proteins, it binds directly to the 5'-end of the 23S rRNA, where it nucleates assembly of the 50S subunit. Functionally, one of the proteins that surrounds the polypeptide exit tunnel on the outside of the subunit. The polypeptide is Large ribosomal subunit protein uL24 (Mycoplasma capricolum subsp. capricolum (strain California kid / ATCC 27343 / NCTC 10154)).